The following is a 152-amino-acid chain: MKCPSCQHNGSRVLDSRPADEGKSIRRRRECEACHYRFTTFEKFEEMPLIVVKKEGVREEFSREKMLRGLIKACEKRPVPLKTLEDMCFDIEKELRNQGVSEVKSELVGEMVMDRLAKIDEVSYVRFASVYRQFKDINVFIDELKDLIKKER.

The segment covering 1–10 (MKCPSCQHNG) has biased composition (polar residues). The interval 1 to 21 (MKCPSCQHNGSRVLDSRPADE) is disordered. A zinc finger spans residues 3–34 (CPSCQHNGSRVLDSRPADEGKSIRRRRECEAC). In terms of domain architecture, ATP-cone spans 49–139 (LIVVKKEGVR…VYRQFKDINV (91 aa)).

Belongs to the NrdR family. Zn(2+) is required as a cofactor.

In terms of biological role, negatively regulates transcription of bacterial ribonucleotide reductase nrd genes and operons by binding to NrdR-boxes. The protein is Transcriptional repressor NrdR of Bacillus velezensis (strain DSM 23117 / BGSC 10A6 / LMG 26770 / FZB42) (Bacillus amyloliquefaciens subsp. plantarum).